Reading from the N-terminus, the 443-residue chain is Threonine/serine transporter TdcC (443 aa).

11 helical membrane passes run 24 to 44 (WVLGLFGTAIGAGVLFFPISA), 45 to 65 (GIGGLLPIIFMLILAFPIAFF), 95 to 115 (VGGVVITFLYFFAICPLLWIY), 140 to 160 (VVALAILLVMAFFIYFGKDLM), 163 to 183 (VMGYLVFPFITCLVLISLSLI), 207 to 227 (ILVTVWLGIAIMVFSFNFSPI), 259 to 279 (ASVLMVVVVMFFAFSCLFTLS), 319 to 339 (ASIIALVAIFKSFFGHYLGTL), 363 to 383 (LNMISMVIIMGSTWVIAYINP), 385 to 405 (ILDLIGAMGAPIIAALLCLLP), and 423 to 443 (SNYFVTIIGLLTILNIVYQLM).

This sequence belongs to the amino acid/polyamine transporter 2 family. SdaC/TdcC subfamily.

It localises to the cell inner membrane. The catalysed reaction is L-threonine(in) + H(+)(in) = L-threonine(out) + H(+)(out). It catalyses the reaction L-serine(in) + H(+)(in) = L-serine(out) + H(+)(out). In terms of biological role, involved in the import of threonine and serine into the cell, with the concomitant import of a proton (symport system). The polypeptide is Threonine/serine transporter TdcC (Edwardsiella piscicida).